The following is a 111-amino-acid chain: Protein GLUTAMINE DUMPER 6 (111 aa).

Residues 1–16 (MRPTPKVEIWKSPVPY) lie on the Extracellular side of the membrane. A helical transmembrane segment spans residues 17–37 (LFGGLFLLVLLIALALLSLVC). At 38-111 (THQKPSSSSN…NCDNVTVIST (74 aa)) the chain is on the cytoplasmic side. A compositionally biased stretch (polar residues) spans 40 to 49 (QKPSSSSNNN). The tract at residues 40 to 63 (QKPSSSSNNNHMDEEDDVGDKDAK) is disordered. The short motif at 75–79 (VILAG) is the VIMAG; degenerate element.

It belongs to the GLUTAMINE DUMPER 1 (TC 9.B.60) family. Expressed in the vascular tissues.

The protein localises to the membrane. Its function is as follows. Probable subunit of an amino acid transporter involved in the regulation of the amino acid metabolism. Stimulates amino acid export by activating nonselective amino acid facilitators. In Arabidopsis thaliana (Mouse-ear cress), this protein is Protein GLUTAMINE DUMPER 6 (GDU6).